A 463-amino-acid chain; its full sequence is Methionine aminopeptidase 2-2 (463 aa).

Residues 1 to 97 form a disordered region; it reads MGSKSPEGHW…TLSVTELKQT (97 aa). Polar residues predominate over residues 27–36; that stretch reads DPQTSQNGSG. Over residues 46–57 the composition is skewed to acidic residues; sequence GDDDDDDEDAEE. Residues 69 to 85 are compositionally biased toward basic residues; sequence KKKKRKKSNKKKKKKTK. Positions 86-97 are enriched in polar residues; sequence SGTLSVTELKQT. Histidine 215 is a binding site for substrate. Positions 236, 247, and 316 each coordinate a divalent metal cation. Position 324 (histidine 324) interacts with substrate. A divalent metal cation contacts are provided by glutamate 349 and glutamate 444.

Belongs to the peptidase M24A family. Methionine aminopeptidase eukaryotic type 2 subfamily. It depends on Co(2+) as a cofactor. Zn(2+) is required as a cofactor. Mn(2+) serves as cofactor. Requires Fe(2+) as cofactor.

Its subcellular location is the cytoplasm. The catalysed reaction is Release of N-terminal amino acids, preferentially methionine, from peptides and arylamides.. Functionally, cotranslationally removes the N-terminal methionine from nascent proteins. The N-terminal methionine is often cleaved when the second residue in the primary sequence is small and uncharged (Met-Ala-, Cys, Gly, Pro, Ser, Thr, or Val). The protein is Methionine aminopeptidase 2-2 of Neosartorya fischeri (strain ATCC 1020 / DSM 3700 / CBS 544.65 / FGSC A1164 / JCM 1740 / NRRL 181 / WB 181) (Aspergillus fischerianus).